The primary structure comprises 652 residues: Phosphomethylpyrimidine synthase (652 aa).

Substrate-binding positions include asparagine 257, methionine 286, tyrosine 315, histidine 351, 371 to 373 (SRG), 412 to 415 (DGLR), and glutamate 451. Histidine 455 is a binding site for Zn(2+). Tyrosine 478 contributes to the substrate binding site. Zn(2+) is bound at residue histidine 519. Residues cysteine 599, cysteine 602, and cysteine 607 each contribute to the [4Fe-4S] cluster site.

This sequence belongs to the ThiC family. Homodimer. The cofactor is [4Fe-4S] cluster.

It catalyses the reaction 5-amino-1-(5-phospho-beta-D-ribosyl)imidazole + S-adenosyl-L-methionine = 4-amino-2-methyl-5-(phosphooxymethyl)pyrimidine + CO + 5'-deoxyadenosine + formate + L-methionine + 3 H(+). It functions in the pathway cofactor biosynthesis; thiamine diphosphate biosynthesis. Functionally, catalyzes the synthesis of the hydroxymethylpyrimidine phosphate (HMP-P) moiety of thiamine from aminoimidazole ribotide (AIR) in a radical S-adenosyl-L-methionine (SAM)-dependent reaction. This Thiobacillus denitrificans (strain ATCC 25259 / T1) protein is Phosphomethylpyrimidine synthase.